Here is a 770-residue protein sequence, read N- to C-terminus: MSELNEMQKLAWAGFAGGDWQENVNVRDFIQKNYTPYEGDDSFLAGPTEATTKLWESVMEGIKIENRTHAPLDFDEHTPSTIISHAPGYINKDLEKIVGLQTDEPLKRAIMPFGGIKMVEGSCKVYGRELDPKVKKIFTEYRKTHNQGVFDVYTPDILRCRKSGVLTGLPDAYGRGRIIGDYRRVALYGVDFLMKDKYAQFSSLQKDLEDGVNLEATIRLREEIAEQHRALGQLKQMAASYGYDISNPATNAQEAIQWMYFAYLAAIKSQNGAAMSFGRTATFIDVYIERDLKAGKITETEAQELVDHLVMKLRMVRFLRTPEYDQLFSGDPMWATETIAGMGLDGRTLVTKNTFRILHTLYNMGTSPEPNLTILWSEQLPENFKRFCAKVSIDTSSVQYENDDLMRPDFNNDDYAIACCVSPMIVGKQMQFFGARANLAKTLLYAINGGIDEKLGMQVGPKTAPITDEVLDFDTVMTRMDSFMDWLAKQYVTALNVIHYMHDKYSYEAALMALHDRDVYRTMACGIAGLSVAADSLSAIKYAKVKPVRGDIKDKDGNVVATNVAIDFEIEGEYPQYGNNDNRVDDIACDLVERFMKKIQKLKTYRNAVPTQSVLTITSNVVYGKKTGNTPDGRRAGAPFGPGANPMHGRDQKGAVASLTSVAKLPFAYAKDGISYTFSIVPNALGKDAEAQRRNLAGLMDGYFHHEATVEGGQHLNVNVLNREMLLDAMENPDKYPQLTIRVSGYAVRFNSLTKEQQQDVITRTFTESM.

The region spanning 5 to 635 (NEMQKLAWAG…KTGNTPDGRR (631 aa)) is the PFL domain. Residue C419 is the S-acetylcysteine intermediate of the active site. C420 (cysteine radical intermediate) is an active-site residue. The 129-residue stretch at 642–770 (PGANPMHGRD…VITRTFTESM (129 aa)) folds into the Glycine radical domain. G745 is modified (glycine radical).

This sequence belongs to the glycyl radical enzyme (GRE) family. PFL subfamily. As to quaternary structure, homodimer.

The protein resides in the cytoplasm. The catalysed reaction is formate + acetyl-CoA = pyruvate + CoA. Its pathway is fermentation; pyruvate fermentation; formate from pyruvate: step 1/1. In terms of biological role, catalyzes the conversion of pyruvate to formate and acetyl-CoA. The polypeptide is Formate acetyltransferase (pflB) (Haemophilus influenzae (strain ATCC 51907 / DSM 11121 / KW20 / Rd)).